The primary structure comprises 483 residues: Putative inorganic phosphate cotransporter (483 aa).

7 helical membrane-spanning segments follow: residues 64 to 84 (YILSSFFYGYVITQIPFGILA), 90 to 110 (LRFLGYGMLINSVFAFLVPVA), 187 to 207 (IFYVFGIVGTVWSIAFLIFVY), 292 to 312 (LPYLAMWLLSMFISVIADWMI), 349 to 369 (ALTLAILTIGVGLNGGIYSGF), 383 to 403 (FLMSITNCSANLAGLLAPIAA), and 420 to 440 (IVFFIAAFVYIICGTFYNIFG). Positions 447 to 483 (WDNPSEDEQKPALESSSTTNPPRLSNGSSAPRAISSS) are disordered. Over residues 460–483 (ESSSTTNPPRLSNGSSAPRAISSS) the composition is skewed to polar residues.

It belongs to the major facilitator superfamily. Sodium/anion cotransporter family.

Its subcellular location is the membrane. May be an inorganic phosphate cotransporter. The sequence is that of Putative inorganic phosphate cotransporter (Picot) from Drosophila ananassae (Fruit fly).